Consider the following 100-residue polypeptide: Large ribosomal subunit protein uL23 (100 aa).

This sequence belongs to the universal ribosomal protein uL23 family. As to quaternary structure, part of the 50S ribosomal subunit. Contacts protein L29, and trigger factor when it is bound to the ribosome.

In terms of biological role, one of the early assembly proteins it binds 23S rRNA. One of the proteins that surrounds the polypeptide exit tunnel on the outside of the ribosome. Forms the main docking site for trigger factor binding to the ribosome. The sequence is that of Large ribosomal subunit protein uL23 from Synechococcus sp. (strain CC9311).